The sequence spans 219 residues: 2-hydroxy-3-keto-5-methylthiopentenyl-1-phosphate phosphatase (219 aa).

It belongs to the HAD-like hydrolase superfamily. MtnX family.

The catalysed reaction is 2-hydroxy-5-methylsulfanyl-3-oxopent-1-enyl phosphate + H2O = 1,2-dihydroxy-5-(methylsulfanyl)pent-1-en-3-one + phosphate. It functions in the pathway amino-acid biosynthesis; L-methionine biosynthesis via salvage pathway; L-methionine from S-methyl-5-thio-alpha-D-ribose 1-phosphate: step 4/6. Its function is as follows. Dephosphorylates 2-hydroxy-3-keto-5-methylthiopentenyl-1-phosphate (HK-MTPenyl-1-P) yielding 1,2-dihydroxy-3-keto-5-methylthiopentene (DHK-MTPene). The protein is 2-hydroxy-3-keto-5-methylthiopentenyl-1-phosphate phosphatase of Bacillus mycoides (strain KBAB4) (Bacillus weihenstephanensis).